A 507-amino-acid polypeptide reads, in one-letter code: Histidine ammonia-lyase (507 aa).

Positions 141 to 143 (ASG) form a cross-link, 5-imidazolinone (Ala-Gly). S142 bears the 2,3-didehydroalanine (Ser) mark.

The protein belongs to the PAL/histidase family. Post-translationally, contains an active site 4-methylidene-imidazol-5-one (MIO), which is formed autocatalytically by cyclization and dehydration of residues Ala-Ser-Gly.

The protein localises to the cytoplasm. It catalyses the reaction L-histidine = trans-urocanate + NH4(+). The protein operates within amino-acid degradation; L-histidine degradation into L-glutamate; N-formimidoyl-L-glutamate from L-histidine: step 1/3. This is Histidine ammonia-lyase from Burkholderia cenocepacia (strain ATCC BAA-245 / DSM 16553 / LMG 16656 / NCTC 13227 / J2315 / CF5610) (Burkholderia cepacia (strain J2315)).